The sequence spans 182 residues: Probable RNA 2'-phosphotransferase (182 aa).

Belongs to the KptA/TPT1 family.

Removes the 2'-phosphate from RNA via an intermediate in which the phosphate is ADP-ribosylated by NAD followed by a presumed transesterification to release the RNA and generate ADP-ribose 1''-2''-cyclic phosphate (APPR&gt;P). May function as an ADP-ribosylase. This chain is Probable RNA 2'-phosphotransferase, found in Trichormus variabilis (strain ATCC 29413 / PCC 7937) (Anabaena variabilis).